A 287-amino-acid chain; its full sequence is 3-methyl-2-oxobutanoate hydroxymethyltransferase (287 aa).

Positions 57 and 96 each coordinate Mg(2+). Residues 57–58 (DS), Asp96, and Lys125 contribute to the 3-methyl-2-oxobutanoate site. Residue Glu127 participates in Mg(2+) binding. Glu194 (proton acceptor) is an active-site residue.

Belongs to the PanB family. As to quaternary structure, homodecamer; pentamer of dimers. It depends on Mg(2+) as a cofactor.

It localises to the cytoplasm. It carries out the reaction 3-methyl-2-oxobutanoate + (6R)-5,10-methylene-5,6,7,8-tetrahydrofolate + H2O = 2-dehydropantoate + (6S)-5,6,7,8-tetrahydrofolate. It functions in the pathway cofactor biosynthesis; (R)-pantothenate biosynthesis; (R)-pantoate from 3-methyl-2-oxobutanoate: step 1/2. Catalyzes the reversible reaction in which hydroxymethyl group from 5,10-methylenetetrahydrofolate is transferred onto alpha-ketoisovalerate to form ketopantoate. The sequence is that of 3-methyl-2-oxobutanoate hydroxymethyltransferase from Methylobacterium sp. (strain 4-46).